We begin with the raw amino-acid sequence, 65 residues long: SCOCO-like protein 1 (65 aa).

Residues 8–44 (RSLMEQKAMELQQQLQALLDEIDQNKQESENISRESE) are a coiled coil.

This sequence belongs to the SLO1 family.

This Schizosaccharomyces pombe (strain 972 / ATCC 24843) (Fission yeast) protein is SCOCO-like protein 1.